Here is a 445-residue protein sequence, read N- to C-terminus: Ubiquitin carboxyl-terminal hydrolase 11 (445 aa).

Residues 1–412 form the USP domain; sequence NSARADLCVA…AAYVLFYQRQ (412 aa). The segment at 127–194 is disordered; the sequence is RPSSDDEDDG…GPSHWPQRAR (68 aa). Serine 130 is modified (phosphoserine). The segment covering 131 to 140 has biased composition (acidic residues); sequence DDEDDGDEKD. Histidine 362 serves as the catalytic Nucleophile. The active-site Proton acceptor is the histidine 370. The interval 416-445 is disordered; sequence RRLQPQPSSSDPPASPACGSPPNSEFMDVN. Positions 420–439 are enriched in low complexity; it reads PQPSSSDPPASPACGSPPNS. A Phosphoserine modification is found at serine 430.

It belongs to the peptidase C19 family. As to quaternary structure, monomer. Interacts with RANBP9/RANBPM. Interacts with BRCA2. Interacts with CHUK/IKKA. Interacts with NFKBIA. Associated component of the Polycomb group (PcG) multiprotein PRC1-like complex.

Its subcellular location is the nucleus. The protein localises to the cytoplasm. The protein resides in the chromosome. It catalyses the reaction Thiol-dependent hydrolysis of ester, thioester, amide, peptide and isopeptide bonds formed by the C-terminal Gly of ubiquitin (a 76-residue protein attached to proteins as an intracellular targeting signal).. Protease that can remove conjugated ubiquitin from target proteins and polyubiquitin chains. Inhibits the degradation of target proteins by the proteasome. Cleaves preferentially 'Lys-6' and 'Lys-63'-linked ubiquitin chains. Has lower activity with 'Lys-11' and 'Lys-33'-linked ubiquitin chains, and extremely low activity with 'Lys-27', 'Lys-29' and 'Lys-48'-linked ubiquitin chains (in vitro). Plays a role in the regulation of pathways leading to NF-kappa-B activation. Plays a role in the regulation of DNA repair after double-stranded DNA breaks. Acts as a chromatin regulator via its association with the Polycomb group (PcG) multiprotein PRC1-like complex; may act by deubiquitinating components of the PRC1-like complex. Promotes cell proliferation by deubiquitinating phosphorylated E2F1. In Canis lupus familiaris (Dog), this protein is Ubiquitin carboxyl-terminal hydrolase 11 (USP11).